We begin with the raw amino-acid sequence, 412 residues long: NADH-ubiquinone oxidoreductase 49 kDa subunit (412 aa).

Belongs to the complex I 49 kDa subunit family.

The protein localises to the hydrogenosome. The catalysed reaction is a ubiquinone + NADH + 5 H(+)(in) = a ubiquinol + NAD(+) + 4 H(+)(out). Transfer of electrons from NADH to the respiratory chain. The immediate electron acceptor for the enzyme is believed to be ubiquinone. Component of the iron-sulfur (IP) fragment of the enzyme. The chain is NADH-ubiquinone oxidoreductase 49 kDa subunit (nad7) from Nyctotherus ovalis.